We begin with the raw amino-acid sequence, 353 residues long: DNA polymerase IV (353 aa).

The 182-residue stretch at 6 to 187 (IIHVDCDCFY…LPVSKLHGVG (182 aa)) folds into the UmuC domain. Residues Asp10 and Asp105 each coordinate Mg(2+). Glu106 is a catalytic residue.

It belongs to the DNA polymerase type-Y family. Monomer. Mg(2+) is required as a cofactor.

Its subcellular location is the cytoplasm. It carries out the reaction DNA(n) + a 2'-deoxyribonucleoside 5'-triphosphate = DNA(n+1) + diphosphate. Functionally, poorly processive, error-prone DNA polymerase involved in untargeted mutagenesis. Copies undamaged DNA at stalled replication forks, which arise in vivo from mismatched or misaligned primer ends. These misaligned primers can be extended by PolIV. Exhibits no 3'-5' exonuclease (proofreading) activity. May be involved in translesional synthesis, in conjunction with the beta clamp from PolIII. This Pseudomonas fluorescens (strain Pf0-1) protein is DNA polymerase IV.